The sequence spans 582 residues: Protein NARROW LEAF 1 (582 aa).

Disordered regions lie at residues 1-26 (MKPSDDKAQLSGLAQSEESSLDVDHQ) and 531-582 (GMSP…DLEK). Basic and acidic residues predominate over residues 562 to 572 (LGDREPKRLRS). Residues 567 to 573 (PKRLRSD) carry the Nuclear localization signal motif. Residues 573–582 (DSGSSLDLEK) are compositionally biased toward low complexity.

Expressed in leaf sheaths, leaf blades, culms and panicles. Preferentially expressed in vascular tissues in leaves and culms.

It localises to the nucleus. The protein resides in the nucleoplasm. Its subcellular location is the cytoplasm. Its function is as follows. Involved in the regulation of lateral leaf growth. May be involved in the regulation of basipetal polar auxin transport (PAT) and vascular patterning in leaves. Controls photosynthesis rate by regulating carboxylation efficiency and consequently photosynthesis rate. Controls panicle and spikelet numbers, and grain yield. The polypeptide is Protein NARROW LEAF 1 (Oryza sativa subsp. japonica (Rice)).